Consider the following 681-residue polypeptide: Dipeptidyl carboxypeptidase (681 aa).

Residue His-470 coordinates Zn(2+). Glu-471 is a catalytic residue. Residues His-474 and His-477 each coordinate Zn(2+).

This sequence belongs to the peptidase M3 family. Zn(2+) serves as cofactor.

It localises to the cytoplasm. It carries out the reaction Hydrolysis of unblocked, C-terminal dipeptides from oligopeptides, with broad specificity. Does not hydrolyze bonds in which P1' is Pro, or both P1 and P1' are Gly.. Its activity is regulated as follows. Stimulated by Mn(2+), Mg(2+), Co(2+) and Ca(2+), inhibited by Cu(2+), Ni(2+), Zn(2+), chymostatin and 1,10-phenanthroline. Its function is as follows. Removes dipeptides from the C-termini of N-blocked tripeptides, tetrapeptides and larger peptides. The protein is Dipeptidyl carboxypeptidase of Escherichia coli (strain K12).